The following is a 163-amino-acid chain: Protein LOL5 (163 aa).

2 stretches are compositionally biased toward polar residues: residues methionine 1–serine 25 and leucine 33–histidine 44. The tract at residues methionine 1–aspartate 51 is disordered. Putative zinc finger stretches follow at residues glutamine 70–valine 100 and lysine 108–isoleucine 138.

Its subcellular location is the nucleus. In terms of biological role, involved in plant growth and disease resistance. The protein is Protein LOL5 (LOL5) of Oryza sativa subsp. japonica (Rice).